The primary structure comprises 330 residues: Phosphate acyltransferase (330 aa).

This sequence belongs to the PlsX family. In terms of assembly, homodimer. Probably interacts with PlsY.

Its subcellular location is the cytoplasm. It carries out the reaction a fatty acyl-[ACP] + phosphate = an acyl phosphate + holo-[ACP]. The protein operates within lipid metabolism; phospholipid metabolism. Functionally, catalyzes the reversible formation of acyl-phosphate (acyl-PO(4)) from acyl-[acyl-carrier-protein] (acyl-ACP). This enzyme utilizes acyl-ACP as fatty acyl donor, but not acyl-CoA. This Teredinibacter turnerae (strain ATCC 39867 / T7901) protein is Phosphate acyltransferase.